A 287-amino-acid polypeptide reads, in one-letter code: Putative sugar uptake protein spyM18_2243 (287 aa).

10 helical membrane-spanning segments follow: residues 4 to 26, 33 to 50, 55 to 72, 85 to 107, 117 to 134, 154 to 171, 181 to 200, 207 to 229, 234 to 256, and 268 to 285; these read IFYALIPMFTWGSIGFVSNKIGG, LGMTFGALLFSLAVWLIV, TLQLWLFGILGGFIWSIG, VSVANPLSSGSQLVLGSLIGVLV, FVVGSLALLLLIVGFYFS, FRALTYSTIGYVMYAVLF, SVILPMAVGMVLGAITFMSF, YVIKNSVVGLLWGIGNIFMLLAA, LAIAFSFSQLGAIISIVGGILFL, and VVTGIICFIVGAILLGVV.

Belongs to the GRP transporter (TC 2.A.7.5) family.

It is found in the cell membrane. This is Putative sugar uptake protein spyM18_2243 from Streptococcus pyogenes serotype M18 (strain MGAS8232).